We begin with the raw amino-acid sequence, 404 residues long: CCA-adding enzyme (404 aa).

2 residues coordinate ATP: Gly27 and Arg30. 2 residues coordinate CTP: Gly27 and Arg30. 2 residues coordinate Mg(2+): Asp40 and Asp42. Residues Arg111, Asp154, Arg157, Arg160, and Arg163 each contribute to the ATP site. The CTP site is built by Arg111, Asp154, Arg157, Arg160, and Arg163.

This sequence belongs to the tRNA nucleotidyltransferase/poly(A) polymerase family. Bacterial CCA-adding enzyme type 3 subfamily. As to quaternary structure, homodimer. Mg(2+) is required as a cofactor.

It catalyses the reaction a tRNA precursor + 2 CTP + ATP = a tRNA with a 3' CCA end + 3 diphosphate. It carries out the reaction a tRNA with a 3' CCA end + 2 CTP + ATP = a tRNA with a 3' CCACCA end + 3 diphosphate. Functionally, catalyzes the addition and repair of the essential 3'-terminal CCA sequence in tRNAs without using a nucleic acid template. Adds these three nucleotides in the order of C, C, and A to the tRNA nucleotide-73, using CTP and ATP as substrates and producing inorganic pyrophosphate. tRNA 3'-terminal CCA addition is required both for tRNA processing and repair. Also involved in tRNA surveillance by mediating tandem CCA addition to generate a CCACCA at the 3' terminus of unstable tRNAs. While stable tRNAs receive only 3'-terminal CCA, unstable tRNAs are marked with CCACCA and rapidly degraded. The protein is CCA-adding enzyme of Geobacillus sp. (strain WCH70).